The chain runs to 487 residues: GTPase Der (487 aa).

EngA-type G domains lie at 3–167 and 203–378; these read FTLA…EGFA and LQIA…DIWN. Residues 9-16, 56-60, 119-122, 209-216, 256-260, and 321-324 contribute to the GTP site; these read GRPNVGKS, DTAGL, NKAE, GRPNAGKS, DTAGM, and NKWD. The KH-like domain maps to 379-463; the sequence is RRITTARLNS…PIRLTMRGQG (85 aa). Residues 459 to 487 are disordered; that stretch reads MRGQGDKNPFKERKFRTPSRLRKHLGKKG. A compositionally biased stretch (basic residues) spans 471-487; sequence RKFRTPSRLRKHLGKKG.

This sequence belongs to the TRAFAC class TrmE-Era-EngA-EngB-Septin-like GTPase superfamily. EngA (Der) GTPase family. As to quaternary structure, associates with the 50S ribosomal subunit.

Its function is as follows. GTPase that plays an essential role in the late steps of ribosome biogenesis. In Cereibacter sphaeroides (strain ATCC 17025 / ATH 2.4.3) (Rhodobacter sphaeroides), this protein is GTPase Der.